A 663-amino-acid polypeptide reads, in one-letter code: LEAF RUST 10 DISEASE-RESISTANCE LOCUS RECEPTOR-LIKE PROTEIN KINASE-like 1.4 (663 aa).

Positions 1–25 are cleaved as a signal peptide; the sequence is MYYPLSSSLMFFILFSLFYHLPCES. Residues 26–241 lie on the Extracellular side of the membrane; the sequence is SKCESLFQCG…TSLSIGAKAG (216 aa). Asn36, Asn64, Asn106, Asn137, and Asn208 each carry an N-linked (GlcNAc...) asparagine glycan. A helical transmembrane segment spans residues 242 to 262; sequence IAVASVSGLAILLLAGLFLCI. Over 263–663 the chain is Cytoplasmic; that stretch reads RRRRKTQDAQ…TSSSDTAASL (401 aa). Residues 282–304 form a disordered region; sequence SYSSRDTSRNPTSTTISSSSNHS. Over residues 290–304 the composition is skewed to low complexity; it reads RNPTSTTISSSSNHS. Residues 334 to 609 enclose the Protein kinase domain; sequence ENFSRELGDG…DEIVEILRGI (276 aa). Residues 340–348 and Lys362 contribute to the ATP site; that span reads LGDGGFGTV. Asp458 acts as the Proton acceptor in catalysis. The tract at residues 637–663 is disordered; the sequence is LLRNSVPPPISPETDKWTSSSDTAASL. Residues 653-663 show a composition bias toward polar residues; sequence WTSSSDTAASL.

Belongs to the protein kinase superfamily. Ser/Thr protein kinase family.

The protein resides in the cell membrane. It carries out the reaction L-seryl-[protein] + ATP = O-phospho-L-seryl-[protein] + ADP + H(+). The catalysed reaction is L-threonyl-[protein] + ATP = O-phospho-L-threonyl-[protein] + ADP + H(+). The protein is LEAF RUST 10 DISEASE-RESISTANCE LOCUS RECEPTOR-LIKE PROTEIN KINASE-like 1.4 of Arabidopsis thaliana (Mouse-ear cress).